A 785-amino-acid polypeptide reads, in one-letter code: Conserved oligomeric Golgi complex subunit 4 (785 aa).

Residues 1–24 (MADLDSPPKLSGVQQPSEGVGGGR) are disordered. A2 bears the N-acetylalanine mark. The interval 2–84 (ADLDSPPKLS…VTLHRMGPNL (83 aa)) is interaction with SCFD1. S6 is modified (phosphoserine). Residues 85-153 (QLIEGDAKQL…TALRSEDYEQ (69 aa)) form an interaction with STX5 region. The d domain stretch occupies residues 618-740 (PQVQPWINSF…SQMATILNLE (123 aa)). The interval 741 to 785 (RVTEILDYWGPNSGPLTWRLTPAEVRQVLALRIDFRSEDIKRLRL) is e domain; essential for proper cell surface glycosylation.

It belongs to the COG4 family. Monomer. Component of the conserved oligomeric Golgi (COG) complex which is composed of eight different subunits and is required for normal Golgi morphology and localization. Mediates interaction of SCFD1 with the COG complex. Interacts with STX5.

It is found in the cytoplasm. Its subcellular location is the cytosol. The protein resides in the golgi apparatus membrane. Functionally, required for normal Golgi function. Plays a role in SNARE-pin assembly and Golgi-to-ER retrograde transport via its interaction with SCFD1. The chain is Conserved oligomeric Golgi complex subunit 4 (COG4) from Homo sapiens (Human).